The chain runs to 303 residues: 1D-myo-inositol 2-acetamido-2-deoxy-alpha-D-glucopyranoside deacetylase 1 (303 aa).

Positions 15, 18, and 157 each coordinate Zn(2+).

Belongs to the MshB deacetylase family. Zn(2+) serves as cofactor.

It catalyses the reaction 1D-myo-inositol 2-acetamido-2-deoxy-alpha-D-glucopyranoside + H2O = 1D-myo-inositol 2-amino-2-deoxy-alpha-D-glucopyranoside + acetate. In terms of biological role, catalyzes the deacetylation of 1D-myo-inositol 2-acetamido-2-deoxy-alpha-D-glucopyranoside (GlcNAc-Ins) in the mycothiol biosynthesis pathway. The sequence is that of 1D-myo-inositol 2-acetamido-2-deoxy-alpha-D-glucopyranoside deacetylase 1 from Saccharopolyspora erythraea (strain ATCC 11635 / DSM 40517 / JCM 4748 / NBRC 13426 / NCIMB 8594 / NRRL 2338).